The sequence spans 622 residues: uncharacterized protein (622 aa).

A signal peptide spans 1–20; the sequence is MKIKAVAIFLSLLMIISLFS.

This is an uncharacterized protein from Methanocaldococcus jannaschii (strain ATCC 43067 / DSM 2661 / JAL-1 / JCM 10045 / NBRC 100440) (Methanococcus jannaschii).